The following is a 341-amino-acid chain: GDP-mannose transporter GONST5 (341 aa).

Helical transmembrane passes span Leu17–Phe37, Phe44–Ile64, Phe89–Phe109, Leu141–Phe161, Ile192–Leu212, Ile233–Ile253, Thr260–Phe280, and Ile284–Tyr304. The EamA domain occupies Asn33–Ser152.

Belongs to the TPT transporter family. TPT (TC 2.A.7.9) subfamily. As to expression, expressed in rosette leaves, flowers and siliques.

The protein localises to the golgi apparatus membrane. In terms of biological role, GDP-mannose transporter that may be involved in the import of GDP-mannose from the cytoplasm into the Golgi lumen. This chain is GDP-mannose transporter GONST5 (GONST5), found in Arabidopsis thaliana (Mouse-ear cress).